The sequence spans 181 residues: Oligoribonuclease (181 aa).

Positions 8–171 (LIWIDLEMTG…DDIRESVAEL (164 aa)) constitute an Exonuclease domain. Tyr-129 is an active-site residue.

This sequence belongs to the oligoribonuclease family. In terms of assembly, homodimer.

The protein localises to the cytoplasm. In terms of biological role, 3'-to-5' exoribonuclease specific for small oligoribonucleotides. The polypeptide is Oligoribonuclease (Escherichia coli O139:H28 (strain E24377A / ETEC)).